Here is a 307-residue protein sequence, read N- to C-terminus: Stage III sporulation protein AA (307 aa).

Residue 143–150 coordinates ATP; it reads GPPQTGKT.

The chain is Stage III sporulation protein AA (spoIIIAA) from Bacillus subtilis (strain 168).